The following is a 495-amino-acid chain: Ribose import ATP-binding protein RbsA 3 (495 aa).

ABC transporter domains follow at residues 5–240 and 250–492; these read VRLR…VGRE and AEIG…TGVK. Position 37 to 44 (37 to 44) interacts with ATP; that stretch reads GENGAGKS.

The protein belongs to the ABC transporter superfamily. Ribose importer (TC 3.A.1.2.1) family. As to quaternary structure, the complex is composed of an ATP-binding protein (RbsA), two transmembrane proteins (RbsC) and a solute-binding protein (RbsB).

It is found in the cell membrane. It catalyses the reaction D-ribose(out) + ATP + H2O = D-ribose(in) + ADP + phosphate + H(+). Its function is as follows. Part of the ABC transporter complex RbsABC involved in ribose import. Responsible for energy coupling to the transport system. This is Ribose import ATP-binding protein RbsA 3 from Rubrobacter xylanophilus (strain DSM 9941 / JCM 11954 / NBRC 16129 / PRD-1).